The following is a 320-amino-acid chain: Aspartate carbamoyltransferase catalytic subunit (320 aa).

Positions 68 and 69 each coordinate carbamoyl phosphate. Lysine 96 contributes to the L-aspartate binding site. 3 residues coordinate carbamoyl phosphate: arginine 118, histidine 148, and glutamine 151. The L-aspartate site is built by arginine 181 and arginine 236. Carbamoyl phosphate-binding residues include glycine 277 and proline 278.

Belongs to the aspartate/ornithine carbamoyltransferase superfamily. ATCase family. As to quaternary structure, heterododecamer (2C3:3R2) of six catalytic PyrB chains organized as two trimers (C3), and six regulatory PyrI chains organized as three dimers (R2).

The enzyme catalyses carbamoyl phosphate + L-aspartate = N-carbamoyl-L-aspartate + phosphate + H(+). The protein operates within pyrimidine metabolism; UMP biosynthesis via de novo pathway; (S)-dihydroorotate from bicarbonate: step 2/3. Its function is as follows. Catalyzes the condensation of carbamoyl phosphate and aspartate to form carbamoyl aspartate and inorganic phosphate, the committed step in the de novo pyrimidine nucleotide biosynthesis pathway. This Polaromonas sp. (strain JS666 / ATCC BAA-500) protein is Aspartate carbamoyltransferase catalytic subunit.